A 541-amino-acid chain; its full sequence is Chaperonin GroEL (541 aa).

Residues 29 to 32, 86 to 90, Gly413, 476 to 478, and Asp492 contribute to the ATP site; these read TLGP, DGTTT, and NAA.

Belongs to the chaperonin (HSP60) family. As to quaternary structure, forms a cylinder of 14 subunits composed of two heptameric rings stacked back-to-back. Interacts with the co-chaperonin GroES.

The protein localises to the cytoplasm. The enzyme catalyses ATP + H2O + a folded polypeptide = ADP + phosphate + an unfolded polypeptide.. In terms of biological role, together with its co-chaperonin GroES, plays an essential role in assisting protein folding. The GroEL-GroES system forms a nano-cage that allows encapsulation of the non-native substrate proteins and provides a physical environment optimized to promote and accelerate protein folding. This Streptococcus equi subsp. zooepidemicus (strain H70) protein is Chaperonin GroEL.